Consider the following 582-residue polypeptide: MVKVLFETAVGFCLFNVSDSSKLEATKNLHESLDSAEGASNLLKLSAIHRFTNTAEAVEDISAINEGKMSKSLKKFLTDEIVEGKGKEKENLIVAESKLASNIAKKLGIQVTYDSELLDLYRGIRENLATLLSSSSGDESLDPRDLNTMSLGLSHSLSRYKLKFSPDKVDTMVVQAIGLLDDLDKEINIYAMRVKEWYGWHFPEMGKIITDNLAYAKVIRAMGFRTNASATDFSEILPEEIEETLKAAAEISMGTEISETDLEHIWSLCDQVISITQYRTQLYQYLQNRMAAIAPNLTALVGDLVGARLISHAGSLMNLAKHPASTVQILGAEKALFRALKTKHDTPKYGLIYHSSLVGQAPQKLKGKMARMVATKAALSIRLDALADADTKSDEGAPTVGIEARAKLESRLRALEMQSGLSGMRSARNAAGDQGHKQKGFQMEAGGRSYNAAADAAGPSDMASAANMAPSMLPSTPAKPSTTTDEEKKLSKEERKALKKARKSEIAASEPATPAAASEAGDDKLSKEERKALKKAKKDANGVETPKKEKKDKKKRSADEADVNGTPKSEPGSSKKKKSKKD.

One can recognise a Nop domain in the interval 293–417 (IAPNLTALVG…LESRLRALEM (125 aa)). The disordered stretch occupies residues 461-582 (DMASAANMAP…SSKKKKSKKD (122 aa)). The segment covering 485-496 (DEEKKLSKEERK) has biased composition (basic and acidic residues). Low complexity predominate over residues 507 to 519 (AASEPATPAAASE). Composition is skewed to basic and acidic residues over residues 521–531 (GDDKLSKEERK) and 538–549 (KDANGVETPKKE).

It belongs to the NOP5/NOP56 family.

The protein localises to the nucleus. It localises to the nucleolus. In terms of biological role, required for pre-18S rRNA processing. May bind microtubules. This Mycosarcoma maydis (Corn smut fungus) protein is Nucleolar protein 58 (NOP58).